The sequence spans 362 residues: MDDLIARHYNFTGKFRKVHKDPGLKADSVVFIIVCCFIILENVLVLLTIWRTKKFHKPMYYFIGNLALSDLLAGVVYTANILLSGANTYKLTPTQWFFREGSMFVALAASVFSLLAIAIERHLTMLKMKLHNNGKTCRVFMLISTVWFIAAILGGLPVMGWNCIDSMNNCSTVLPLYHKAYILFCTTVFSVILMAIVILYARIYALVRTRSRKLVFRKVANGRGSNKSSEKSMALLKTVIIVLSCFIACWAPLFILLLLDVACQTLTCSILYKAEWFLALAVLNSAMNPLIYTLTSNEMRRAFIKMLNCGVCVQPSGKFSRPIMGAEFSRSKSDNSSHPNKDEPEYSPRETIVSSGNITSSS.

The Extracellular portion of the chain corresponds to 1-25 (MDDLIARHYNFTGKFRKVHKDPGLK). N10 carries an N-linked (GlcNAc...) asparagine glycan. The chain crosses the membrane as a helical span at residues 26-47 (ADSVVFIIVCCFIILENVLVLL). Residues 48 to 61 (TIWRTKKFHKPMYY) are Cytoplasmic-facing. The helical transmembrane segment at 62–83 (FIGNLALSDLLAGVVYTANILL) threads the bilayer. Residues 84–95 (SGANTYKLTPTQ) lie on the Extracellular side of the membrane. A helical transmembrane segment spans residues 96-117 (WFFREGSMFVALAASVFSLLAI). Residue 99-100 (RE) coordinates sphing-4-enine 1-phosphate. The Cytoplasmic segment spans residues 118–139 (AIERHLTMLKMKLHNNGKTCRV). The helical transmembrane segment at 140–161 (FMLISTVWFIAAILGGLPVMGW) threads the bilayer. Topologically, residues 162 to 175 (NCIDSMNNCSTVLP) are extracellular. C163 and C170 form a disulfide bridge. A glycan (N-linked (GlcNAc...) asparagine) is linked at N169. The helical transmembrane segment at 176-203 (LYHKAYILFCTTVFSVILMAIVILYARI) threads the bilayer. Residues 204–238 (YALVRTRSRKLVFRKVANGRGSNKSSEKSMALLKT) lie on the Cytoplasmic side of the membrane. Residues 239 to 259 (VIIVLSCFIACWAPLFILLLL) traverse the membrane as a helical segment. 246 to 250 (FIACW) contributes to the sphing-4-enine 1-phosphate binding site. Residues 260–270 (DVACQTLTCSI) are Extracellular-facing. C263 and C268 are oxidised to a cystine. A helical transmembrane segment spans residues 271–291 (LYKAEWFLALAVLNSAMNPLI). The Cytoplasmic portion of the chain corresponds to 292-362 (YTLTSNEMRR…VSSGNITSSS (71 aa)). The S-palmitoyl cysteine moiety is linked to residue C309. Positions 328 to 362 (FSRSKSDNSSHPNKDEPEYSPRETIVSSGNITSSS) are disordered. A compositionally biased stretch (basic and acidic residues) spans 329-348 (SRSKSDNSSHPNKDEPEYSP). Over residues 352–362 (IVSSGNITSSS) the composition is skewed to polar residues.

Belongs to the G-protein coupled receptor 1 family.

Its subcellular location is the cell membrane. Its function is as follows. G-protein coupled receptor for the bioactive lysosphingolipid sphingosine 1-phosphate (S1P) that seems to be coupled to the G(i) subclass of heteromeric G proteins. Signaling leads to the activation of RAC1, SRC, PTK2/FAK1 and MAP kinases. Plays an important role in cell migration, probably via its role in the reorganization of the actin cytoskeleton and the formation of lamellipodia in response to stimuli that increase the activity of the sphingosine kinase SPHK1. Required for normal chemotaxis toward sphingosine 1-phosphate. The chain is Sphingosine 1-phosphate receptor 1 (s1pr1) from Danio rerio (Zebrafish).